The chain runs to 130 residues: Small ribosomal subunit protein uS9 (130 aa).

Positions 109–130 (RMKERKKYGLKGARRAPQFSKR) are disordered. The segment covering 111-130 (KERKKYGLKGARRAPQFSKR) has biased composition (basic residues).

It belongs to the universal ribosomal protein uS9 family.

This chain is Small ribosomal subunit protein uS9, found in Listeria innocua serovar 6a (strain ATCC BAA-680 / CLIP 11262).